The chain runs to 997 residues: FHIP family protein CPIJ015043 (997 aa).

2 disordered regions span residues 558–579 (DHRS…QQLQ) and 759–922 (NVVL…GGAA). Low complexity predominate over residues 569-579 (QQHLHQQQQLQ). The segment covering 763 to 780 (GGSGPGGPRLSNGGGGTG) has biased composition (gly residues). 2 stretches are compositionally biased toward low complexity: residues 781–792 (SSITSSLSQTTP) and 830–889 (GSNS…MVGS). Gly residues predominate over residues 911 to 922 (IGSGTVGGGGAA).

This sequence belongs to the FHIP family.

The polypeptide is FHIP family protein CPIJ015043 (Culex quinquefasciatus (Southern house mosquito)).